The following is a 573-amino-acid chain: Excitatory amino acid transporter 2 (573 aa).

Residues Met-1 to Pro-11 are compositionally biased toward polar residues. The disordered stretch occupies residues Met-1 to Lys-29. Topologically, residues Met-1 to Asn-44 are cytoplasmic. A phosphoserine mark is found at Ser-3, Ser-21, Ser-24, and Ser-25. Basic and acidic residues predominate over residues Val-14–Lys-29. The S-palmitoyl cysteine moiety is linked to residue Cys-38. The next 3 membrane-spanning stretches (helical) occupy residues Leu-45 to Leu-64, Met-88 to Leu-108, and Met-121 to Ile-142. N-linked (GlcNAc...) asparagine glycans are attached at residues Asn-205 and Asn-215. A run of 3 helical transmembrane segments spans residues Phe-235 to Met-258, Phe-268 to Ile-295, and Ile-317 to Val-338. Residues Phe-344–Leu-374 constitute an intramembrane region (discontinuously helical). Ala-361–Ser-363 contacts L-aspartate. A helical membrane pass occupies residues Val-384–Phe-410. 3 residues coordinate Na(+): Gly-392, Thr-394, and Asn-396. Residues Thr-400, Ile-441–Gly-445, Asp-474, and Asn-481 each bind L-aspartate. The discontinuously helical intramembrane region spans Ile-424 to Gly-457. A helical membrane pass occupies residues Trp-471–Val-492. Asn-481 and Asp-485 together coordinate Na(+). A phosphoserine mark is found at Ser-505, Ser-520, Ser-531, and Ser-533. The residue at position 538 (Tyr-538) is a Phosphotyrosine. Phosphoserine occurs at positions 543, 559, and 563.

The protein belongs to the dicarboxylate/amino acid:cation symporter (DAACS) (TC 2.A.23) family. SLC1A2 subfamily. As to quaternary structure, homotrimer. Interacts with AJUBA. Glycosylated. In terms of processing, palmitoylation at Cys-38 is not required for correct subcellular localization, but is important for glutamate uptake activity. As to expression, localized in brain and is highly enriched in the Purkinje cell layer in cerebellum.

The protein resides in the cell membrane. It catalyses the reaction K(+)(in) + L-glutamate(out) + 3 Na(+)(out) + H(+)(out) = K(+)(out) + L-glutamate(in) + 3 Na(+)(in) + H(+)(in). It carries out the reaction D-aspartate(out) + K(+)(in) + 3 Na(+)(out) + H(+)(out) = D-aspartate(in) + K(+)(out) + 3 Na(+)(in) + H(+)(in). The enzyme catalyses K(+)(in) + L-aspartate(out) + 3 Na(+)(out) + H(+)(out) = K(+)(out) + L-aspartate(in) + 3 Na(+)(in) + H(+)(in). In terms of biological role, sodium-dependent, high-affinity amino acid transporter that mediates the uptake of L-glutamate and also L-aspartate and D-aspartate. Functions as a symporter that transports one amino acid molecule together with two or three Na(+) ions and one proton, in parallel with the counter-transport of one K(+) ion. Mediates Cl(-) flux that is not coupled to amino acid transport; this avoids the accumulation of negative charges due to aspartate and Na(+) symport. Essential for the rapid removal of released glutamate from the synaptic cleft, and for terminating the postsynaptic action of glutamate. The polypeptide is Excitatory amino acid transporter 2 (Slc1a2) (Rattus norvegicus (Rat)).